The primary structure comprises 25 residues: Aurein-5.2 (25 aa).

In terms of tissue distribution, expressed by the skin dorsal glands.

The protein localises to the secreted. Has antimicrobial activity against L.lactis and S.uberis. The sequence is that of Aurein-5.2 from Ranoidea raniformis (Southern bell frog).